A 261-amino-acid polypeptide reads, in one-letter code: Putative hydro-lyase SAR11_0660 (261 aa).

It belongs to the D-glutamate cyclase family.

The chain is Putative hydro-lyase SAR11_0660 from Pelagibacter ubique (strain HTCC1062).